A 474-amino-acid chain; its full sequence is Putative pectinesterase/pectinesterase inhibitor 38 (474 aa).

The pectinesterase inhibitor 38 stretch occupies residues 1–130 (MVFGNEMCDE…HSLESITIDV (130 aa)). Asn-80 is a glycosylation site (N-linked (GlcNAc...) asparagine). Residues 164-461 (DVVVAQDGSG…TLPKFIDSAS (298 aa)) are pectinesterase 38. Positions 241 and 271 each coordinate substrate. Asp-294 functions as the Proton donor; for pectinesterase activity in the catalytic mechanism. A disulfide bridge links Cys-308 with Cys-328. Asp-315 serves as the catalytic Nucleophile; for pectinesterase activity. Asn-351 carries an N-linked (GlcNAc...) asparagine glycan. Substrate contacts are provided by Arg-380 and Trp-382. N-linked (GlcNAc...) asparagine glycosylation occurs at Asn-409.

The protein in the N-terminal section; belongs to the PMEI family. In the C-terminal section; belongs to the pectinesterase family.

It is found in the secreted. Its subcellular location is the cell wall. The enzyme catalyses [(1-&gt;4)-alpha-D-galacturonosyl methyl ester](n) + n H2O = [(1-&gt;4)-alpha-D-galacturonosyl](n) + n methanol + n H(+). It participates in glycan metabolism; pectin degradation; 2-dehydro-3-deoxy-D-gluconate from pectin: step 1/5. Its function is as follows. Acts in the modification of cell walls via demethylesterification of cell wall pectin. The chain is Putative pectinesterase/pectinesterase inhibitor 38 (PME38) from Arabidopsis thaliana (Mouse-ear cress).